Here is a 409-residue protein sequence, read N- to C-terminus: Putative kinase Y4dM (409 aa).

The Proton acceptor role is filled by Asp-293.

The protein belongs to the HipA Ser/Thr kinase family.

In Sinorhizobium fredii (strain NBRC 101917 / NGR234), this protein is Putative kinase Y4dM.